The chain runs to 564 residues: Urease subunit alpha (564 aa).

The Urease domain occupies 126–564 (GGIDTHIHFI…LPMAQRYFLF (439 aa)). Ni(2+) contacts are provided by His-131, His-133, and Lys-214. Residue Lys-214 is modified to N6-carboxylysine. Residue His-216 coordinates substrate. Ni(2+) contacts are provided by His-243 and His-269. His-317 serves as the catalytic Proton donor. Asp-357 lines the Ni(2+) pocket.

It belongs to the metallo-dependent hydrolases superfamily. Urease alpha subunit family. In terms of assembly, heterotrimer of UreA (gamma), UreB (beta) and UreC (alpha) subunits. Three heterotrimers associate to form the active enzyme. Ni cation is required as a cofactor. Carboxylation allows a single lysine to coordinate two nickel ions.

The protein resides in the cytoplasm. The enzyme catalyses urea + 2 H2O + H(+) = hydrogencarbonate + 2 NH4(+). It participates in nitrogen metabolism; urea degradation; CO(2) and NH(3) from urea (urease route): step 1/1. The chain is Urease subunit alpha from Burkholderia pseudomallei (strain 1710b).